We begin with the raw amino-acid sequence, 444 residues long: Ribosomal protein uS12 methylthiotransferase RimO (444 aa).

Positions 2–118 constitute an MTTase N-terminal domain; sequence LKIALESLGC…IDKILKELSE (117 aa). Positions 11, 47, 81, 155, 159, and 162 each coordinate [4Fe-4S] cluster. The Radical SAM core domain maps to 141 to 371; it reads STPSYMAYLK…MMIQQKISEE (231 aa). The TRAM domain maps to 374-441; it reads DKKIGKTYEV…EYDLMGDVLY (68 aa).

The protein belongs to the methylthiotransferase family. RimO subfamily. [4Fe-4S] cluster is required as a cofactor.

Its subcellular location is the cytoplasm. It carries out the reaction L-aspartate(89)-[ribosomal protein uS12]-hydrogen + (sulfur carrier)-SH + AH2 + 2 S-adenosyl-L-methionine = 3-methylsulfanyl-L-aspartate(89)-[ribosomal protein uS12]-hydrogen + (sulfur carrier)-H + 5'-deoxyadenosine + L-methionine + A + S-adenosyl-L-homocysteine + 2 H(+). Catalyzes the methylthiolation of an aspartic acid residue of ribosomal protein uS12. This chain is Ribosomal protein uS12 methylthiotransferase RimO, found in Clostridioides difficile (strain 630) (Peptoclostridium difficile).